An 89-amino-acid polypeptide reads, in one-letter code: Cell division topological specificity factor (89 aa).

Belongs to the MinE family.

Its function is as follows. Prevents the cell division inhibition by proteins MinC and MinD at internal division sites while permitting inhibition at polar sites. This ensures cell division at the proper site by restricting the formation of a division septum at the midpoint of the long axis of the cell. In Sodalis glossinidius (strain morsitans), this protein is Cell division topological specificity factor.